A 275-amino-acid chain; its full sequence is Large ribosomal subunit protein uL2 (275 aa).

The interval 212–275 (NRHRGIRPQT…DKLIISRRKK (64 aa)) is disordered. Residues 257 to 275 (YKTRRKKPSDKLIISRRKK) are compositionally biased toward basic residues.

Belongs to the universal ribosomal protein uL2 family. In terms of assembly, part of the 50S ribosomal subunit. Forms a bridge to the 30S subunit in the 70S ribosome.

Its function is as follows. One of the primary rRNA binding proteins. Required for association of the 30S and 50S subunits to form the 70S ribosome, for tRNA binding and peptide bond formation. It has been suggested to have peptidyltransferase activity; this is somewhat controversial. Makes several contacts with the 16S rRNA in the 70S ribosome. This chain is Large ribosomal subunit protein uL2, found in Nitratiruptor sp. (strain SB155-2).